Consider the following 391-residue polypeptide: HNVVDYVASAEYKVFAWGLNDPTEGNPTSIRDPWTDASPYTWNSDGMSKYPTTRGNNAIAQDNPTGGSTYINNYRPQSPNLIFSYPWSPTATPPSSYKDFSITQLFYTTNRYHDLLYSFGFNEAAGNFQVNNGNKGGKGNDFAIVNAQDGSGTNNANFATPPDGSPGRMRMYNWTTARPNRDGCLEAGIVIHEYTHGLSNRLCGGPANSACLNALESGGMGEGWGDFYATAIRLKPRDTKNTNYSMGAWAANNPKGIRAYLYSTNLQTNPYMYTSVNSLREVHQIGTVWASMLYDLMWALIEAHGGTYSANPVFRNGVPQDGRHLSMKLVMDGMALQPCNPNFVQARDAILDADRALTNSANKCTIWKAFAKRGLGYGAKYDARNRTGSNK.

Positions 1-9 (HNVVDYVAS) are excised as a propeptide. An N-linked (GlcNAc...) asparagine glycan is attached at Asn173. Residue His192 participates in Zn(2+) binding. Glu193 is an active-site residue. Position 196 (His196) interacts with Zn(2+). N-linked (GlcNAc...) asparagine glycans are attached at residues Asn243 and Asn385.

It belongs to the peptidase M36 family. The cofactor is Zn(2+).

The protein localises to the secreted. Functionally, secreted metalloproteinase probably acting as a virulence factor. The polypeptide is Extracellular metalloproteinase 3 (MEP3) (Trichophyton soudanense).